The following is a 504-amino-acid chain: D-alanine--D-alanyl carrier protein ligase (504 aa).

Position 152–153 (152–153 (TS)) interacts with ATP. Aspartate 197 serves as a coordination point for D-alanine. Residue 292–297 (NTYGPT) coordinates ATP. Valine 301 lines the D-alanine pocket. Residues aspartate 383, 394–397 (YNGR), and lysine 492 contribute to the ATP site. Position 492 (lysine 492) interacts with D-alanine.

It belongs to the ATP-dependent AMP-binding enzyme family. DltA subfamily.

Its subcellular location is the cytoplasm. The catalysed reaction is holo-[D-alanyl-carrier protein] + D-alanine + ATP = D-alanyl-[D-alanyl-carrier protein] + AMP + diphosphate. Its pathway is cell wall biogenesis; lipoteichoic acid biosynthesis. Its function is as follows. Catalyzes the first step in the D-alanylation of lipoteichoic acid (LTA), the activation of D-alanine and its transfer onto the D-alanyl carrier protein (Dcp) DltC. In an ATP-dependent two-step reaction, forms a high energy D-alanyl-AMP intermediate, followed by transfer of the D-alanyl residue as a thiol ester to the phosphopantheinyl prosthetic group of the Dcp. D-alanylation of LTA plays an important role in modulating the properties of the cell wall in Gram-positive bacteria, influencing the net charge of the cell wall. The protein is D-alanine--D-alanyl carrier protein ligase of Bacillus cereus (strain G9842).